A 373-amino-acid chain; its full sequence is MTEVPWSAVPNGTDAAFLAGLGSLWGNSTIASTAAVSSSFRCALIKTGFQFYYLPAVYILVFIIGFLGNSVAIWMFVFHMKPWSGISVYMFNLALADFLYVLTLPALIFYYFNKTDWIFGDVMCKLQRFIFHVNLYGSILFLTCISAHRYSGVVYPLKSLGRLKKKNAIYVSVLVWLIVVVAISPILFYSGTGIRKNKTVTCYDSTSDEYLRSYFIYSMCTTVAMFCIPLVLILGCYGLIVRALIYKDLDNSPLRRKSIYLVIIVLTVFAVSYIPFHVMKTMNLRARLDFQTPEMCDFNDRVYATYQVTRGLASLNSCVDPILYFLAGDTFRRRLSRATRKASRRSEANLQSKSEEMTLNILSEFKQNGDTSL.

Residues 1–51 (MTEVPWSAVPNGTDAAFLAGLGSLWGNSTIASTAAVSSSFRCALIKTGFQF) are Extracellular-facing. N-linked (GlcNAc...) asparagine glycosylation is found at Asn11 and Asn27. 2 disulfide bridges follow: Cys42/Cys296 and Cys124/Cys202. Lys46 is a binding site for ADP. The helical transmembrane segment at 52–74 (YYLPAVYILVFIIGFLGNSVAIW) threads the bilayer. The Cytoplasmic portion of the chain corresponds to 75–87 (MFVFHMKPWSGIS). The helical transmembrane segment at 88–109 (VYMFNLALADFLYVLTLPALIF) threads the bilayer. Topologically, residues 110 to 125 (YYFNKTDWIFGDVMCK) are extracellular. An N-linked (GlcNAc...) asparagine glycan is attached at Asn113. A helical membrane pass occupies residues 126–147 (LQRFIFHVNLYGSILFLTCISA). Topologically, residues 148–166 (HRYSGVVYPLKSLGRLKKK) are cytoplasmic. The chain crosses the membrane as a helical span at residues 167–188 (NAIYVSVLVWLIVVVAISPILF). Over 189–214 (YSGTGIRKNKTVTCYDSTSDEYLRSY) the chain is Extracellular. The N-linked (GlcNAc...) asparagine glycan is linked to Asn197. An ADP-binding site is contributed by 203 to 205 (YDS). The helical transmembrane segment at 215–237 (FIYSMCTTVAMFCIPLVLILGCY) threads the bilayer. Residues 238–260 (GLIVRALIYKDLDNSPLRRKSIY) are Cytoplasmic-facing. A helical membrane pass occupies residues 261–284 (LVIIVLTVFAVSYIPFHVMKTMNL). ADP is bound by residues 283–287 (NLRAR), 303–306 (YATY), and Arg310. The Extracellular portion of the chain corresponds to 285–303 (RARLDFQTPEMCDFNDRVY). Residues 304 to 325 (ATYQVTRGLASLNSCVDPILYF) traverse the membrane as a helical segment. The Cytoplasmic portion of the chain corresponds to 326 to 373 (LAGDTFRRRLSRATRKASRRSEANLQSKSEEMTLNILSEFKQNGDTSL).

This sequence belongs to the G-protein coupled receptor 1 family. In terms of tissue distribution, expressed in muscle, heart, liver, kidney, lung, brain, spleen, but not in testis.

It localises to the cell membrane. In terms of biological role, receptor for extracellular adenine nucleotides such as ADP. In platelets, binding to ADP leads to mobilization of intracellular calcium ions via activation of phospholipase C, a change in platelet shape, and ultimately platelet aggregation. The protein is P2Y purinoceptor 1 (P2ry1) of Rattus norvegicus (Rat).